The chain runs to 424 residues: Homeobox even-skipped homolog protein 2 (424 aa).

Disordered regions lie at residues 18-65 and 132-178; these read PAGK…DTPT and TTQL…GPDQ. Composition is skewed to polar residues over residues 50 to 65 and 132 to 145; these read RPTS…DTPT and TTQL…VYSD. A compositionally biased stretch (low complexity) spans 146-175; sequence NGSSTNTSSNGSNITNLNGNSSSIGNSGSG. The segment at residues 179–238 is a DNA-binding region (homeobox); sequence VRRYRTAFTREQIGRLEKEFYRENYVSRPRRCELAAALNLPETTIKVWFQNRRMKDKRQR.

It belongs to the even-skipped homeobox family.

The protein localises to the nucleus. The polypeptide is Homeobox even-skipped homolog protein 2 (EVX2) (Heterodontus francisci (Horn shark)).